The sequence spans 377 residues: Trans-enoyl reductase FMN2 (377 aa).

One can recognise an Enoyl reductase (ER) domain in the interval 7-370 (NASGGYCLNS…DGVIRGKKLV (364 aa)). The disordered stretch occupies residues 143–173 (LSDMTGNGRSNGYTNGHTNGHTNGHSKGEEE). Residues 144 to 155 (SDMTGNGRSNGY) are compositionally biased toward polar residues. A compositionally biased stretch (low complexity) spans 156–167 (TNGHTNGHTNGH). NADP(+)-binding positions include 186–189 (ASAS), 209–212 (SPAN), Y227, and 274–275 (LD).

This sequence belongs to the zinc-containing alcohol dehydrogenase family.

Its pathway is secondary metabolite biosynthesis. Trans-enoyl reductase; part of the gene cluster that mediates the biosynthesis of fusamarins, isocoumarin derivatives that show moderate cytotoxicity with IC(50) values between 1 and 50 uM. The polyketide synthase FMN1 probably synthesizes two different polyketides, a tetra- and a pentaketide, containinga varying number of double bonds depending on the selective actions of the trans-enoyl reductase FMN2. Chain fusion will presumably be mediated by the KS domain before finally offloading is catalyzed by the alpha/beta hydrolase fold enzyme FMN3. This Fusarium mangiferae (Mango malformation disease fungus) protein is Trans-enoyl reductase FMN2.